A 682-amino-acid polypeptide reads, in one-letter code: Glutamine--fructose-6-phosphate aminotransferase [isomerizing] 2 (682 aa).

C2 acts as the For GATase activity in catalysis. One can recognise a Glutamine amidotransferase type-2 domain in the interval 2–288 (CGIFAYMNYR…DDDIAAVADG (287 aa)). S244 bears the Phosphoserine mark. SIS domains lie at 360 to 499 (HLKE…DRIS) and 531 to 672 (LALE…VDFP). Residues 377–378 (TS), 422–424 (SQS), T427, and H578 contribute to the substrate site.

It carries out the reaction D-fructose 6-phosphate + L-glutamine = D-glucosamine 6-phosphate + L-glutamate. It participates in nucleotide-sugar biosynthesis; UDP-N-acetyl-alpha-D-glucosamine biosynthesis; alpha-D-glucosamine 6-phosphate from D-fructose 6-phosphate: step 1/1. Controls the flux of glucose into the hexosamine pathway. Most likely involved in regulating the availability of precursors for N- and O-linked glycosylation of proteins. The polypeptide is Glutamine--fructose-6-phosphate aminotransferase [isomerizing] 2 (GFPT2) (Bos taurus (Bovine)).